The sequence spans 92 residues: Secreted RxLR effector protein 21 (92 aa).

Residues 1 to 21 (MNLSTLLLTLACISQLHGGSA) form the signal peptide. Residues 30 to 33 (RQLR) carry the RxLR motif.

Belongs to the RxLR effector family.

It localises to the secreted. Its subcellular location is the host nucleus. The protein localises to the host cytoplasm. In terms of biological role, secreted effector that completely suppresses the host cell death induced by cell death-inducing proteins. This Plasmopara viticola (Downy mildew of grapevine) protein is Secreted RxLR effector protein 21.